Here is a 589-residue protein sequence, read N- to C-terminus: DNA mismatch repair protein MutL (589 aa).

Disordered regions lie at residues 330–355 and 374–394; these read LQRR…SHRE and RIYE…SEPT. Positions 331–341 are enriched in basic and acidic residues; sequence QRREAPQRPEP. Pro residues predominate over residues 381–390; the sequence is PYRPPEPPAA.

This sequence belongs to the DNA mismatch repair MutL/HexB family.

Functionally, this protein is involved in the repair of mismatches in DNA. It is required for dam-dependent methyl-directed DNA mismatch repair. May act as a 'molecular matchmaker', a protein that promotes the formation of a stable complex between two or more DNA-binding proteins in an ATP-dependent manner without itself being part of a final effector complex. The chain is DNA mismatch repair protein MutL from Trichlorobacter lovleyi (strain ATCC BAA-1151 / DSM 17278 / SZ) (Geobacter lovleyi).